The following is a 150-amino-acid chain: MPHRSRHKRGSSGSVRPATKTIPPWLSYSPEDVERLVVELARRGFTPSLIGVILRDQYGIPLVKIVTNKRITEILEENGLKPQIPEDLMALIRRAVNIRRHLEEHPKDMSAKKGLLLTESKIHRLIKYYKRTGVLPLDFTYSPERFAMAT.

Residues 1–10 (MPHRSRHKRG) show a composition bias toward basic residues. Positions 1–21 (MPHRSRHKRGSSGSVRPATKT) are disordered.

Belongs to the universal ribosomal protein uS15 family. In terms of assembly, part of the 30S ribosomal subunit.

This Caldivirga maquilingensis (strain ATCC 700844 / DSM 13496 / JCM 10307 / IC-167) protein is Small ribosomal subunit protein uS15.